Reading from the N-terminus, the 137-residue chain is Small ribosomal subunit protein uS12 (137 aa).

The tract at residues 1 to 57 (MPTINQLVRKPRKSKVKKSKSPALNVGYNSRKKVQTNVSSPQKRGVATRVGTMTPKK) is disordered. The span at 9 to 20 (RKPRKSKVKKSK) shows a compositional bias: basic residues. Asp102 carries the 3-methylthioaspartic acid modification.

This sequence belongs to the universal ribosomal protein uS12 family. As to quaternary structure, part of the 30S ribosomal subunit. Contacts proteins S8 and S17. May interact with IF1 in the 30S initiation complex.

In terms of biological role, with S4 and S5 plays an important role in translational accuracy. Its function is as follows. Interacts with and stabilizes bases of the 16S rRNA that are involved in tRNA selection in the A site and with the mRNA backbone. Located at the interface of the 30S and 50S subunits, it traverses the body of the 30S subunit contacting proteins on the other side and probably holding the rRNA structure together. The combined cluster of proteins S8, S12 and S17 appears to hold together the shoulder and platform of the 30S subunit. This chain is Small ribosomal subunit protein uS12, found in Streptococcus suis (strain 05ZYH33).